A 290-amino-acid chain; its full sequence is Protein SSO1 (290 aa).

The Cytoplasmic portion of the chain corresponds to 1 to 265; the sequence is MSYNNPYQLE…ARKARKNKIR (265 aa). One can recognise a t-SNARE coiled-coil homology domain in the interval 190-252; the sequence is LAEVQARHQE…EQGVGHTDKA (63 aa). A helical; Anchor for type IV membrane protein transmembrane segment spans residues 266-287; it reads CWLIVFAIIVVVVVVVVVPAVV. Residues 288-290 are Extracellular-facing; it reads KTR.

Belongs to the syntaxin family.

It is found in the membrane. Its function is as follows. Required for vesicle fusion with the plasma membrane. This chain is Protein SSO1 (SSO1), found in Saccharomyces cerevisiae (strain ATCC 204508 / S288c) (Baker's yeast).